We begin with the raw amino-acid sequence, 248 residues long: Triosephosphate isomerase (248 aa).

11–13 (NWK) is a substrate binding site. Histidine 95 acts as the Electrophile in catalysis. Glutamate 167 serves as the catalytic Proton acceptor. Residues glycine 173, serine 212, and 233–234 (GG) contribute to the substrate site.

It belongs to the triosephosphate isomerase family. Homodimer.

The protein localises to the cytoplasm. The catalysed reaction is D-glyceraldehyde 3-phosphate = dihydroxyacetone phosphate. It participates in carbohydrate biosynthesis; gluconeogenesis. Its pathway is carbohydrate degradation; glycolysis; D-glyceraldehyde 3-phosphate from glycerone phosphate: step 1/1. In terms of biological role, involved in the gluconeogenesis. Catalyzes stereospecifically the conversion of dihydroxyacetone phosphate (DHAP) to D-glyceraldehyde-3-phosphate (G3P). The protein is Triosephosphate isomerase of Ralstonia nicotianae (strain ATCC BAA-1114 / GMI1000) (Ralstonia solanacearum).